The sequence spans 545 residues: GMP synthase [glutamine-hydrolyzing] (545 aa).

The Glutamine amidotransferase type-1 domain maps to 17 to 211; it reads TVLVLDMGSQ…ATKICGARPD (195 aa). Cys93 (nucleophile) is an active-site residue. Active-site residues include His185 and Glu187. The 209-residue stretch at 212–420 folds into the GMPS ATP-PPase domain; sequence WKMDDFSARE…LGIHEELIGR (209 aa). ATP is bound at residue 240 to 246; it reads SGGVDST. The XMP site is built by Arg313, Asp482, Lys537, and Glu543.

Homodimer. Mg(2+) is required as a cofactor.

It is found in the cytoplasm. The protein resides in the cytosol. The enzyme catalyses XMP + L-glutamine + ATP + H2O = GMP + L-glutamate + AMP + diphosphate + 2 H(+). It participates in purine metabolism; GMP biosynthesis; GMP from XMP (L-Gln route): step 1/1. Functionally, catalyzes the conversion of xanthine monophosphate (XMP) to GMP in the presence of glutamine and ATP through an adenyl-XMP intermediate. In Gibberella zeae (strain ATCC MYA-4620 / CBS 123657 / FGSC 9075 / NRRL 31084 / PH-1) (Wheat head blight fungus), this protein is GMP synthase [glutamine-hydrolyzing] (GUA1).